The following is a 314-amino-acid chain: Putative S-adenosyl-L-methionine-dependent methyltransferase MUL_4402 (314 aa).

S-adenosyl-L-methionine-binding positions include Asp-132 and 161–162 (DL). Positions 291–314 (RPVPDDAEGPVPPTLFVSAHRPAA) are disordered.

It belongs to the UPF0677 family.

In terms of biological role, exhibits S-adenosyl-L-methionine-dependent methyltransferase activity. The protein is Putative S-adenosyl-L-methionine-dependent methyltransferase MUL_4402 of Mycobacterium ulcerans (strain Agy99).